The primary structure comprises 386 residues: Phosphoglycerate kinase (386 aa).

Substrate contacts are provided by residues Asp-21–Asn-23, Arg-36, His-59–Arg-62, Arg-113, and Arg-146. ATP contacts are provided by residues Lys-197, Glu-314, and Gly-340 to Thr-343.

It belongs to the phosphoglycerate kinase family. Monomer.

It localises to the cytoplasm. The enzyme catalyses (2R)-3-phosphoglycerate + ATP = (2R)-3-phospho-glyceroyl phosphate + ADP. Its pathway is carbohydrate degradation; glycolysis; pyruvate from D-glyceraldehyde 3-phosphate: step 2/5. This chain is Phosphoglycerate kinase, found in Ectopseudomonas mendocina (strain ymp) (Pseudomonas mendocina).